The primary structure comprises 100 residues: Large ribosomal subunit protein uL23 (100 aa).

Belongs to the universal ribosomal protein uL23 family. In terms of assembly, part of the 50S ribosomal subunit. Contacts protein L29, and trigger factor when it is bound to the ribosome.

One of the early assembly proteins it binds 23S rRNA. One of the proteins that surrounds the polypeptide exit tunnel on the outside of the ribosome. Forms the main docking site for trigger factor binding to the ribosome. This chain is Large ribosomal subunit protein uL23, found in Yersinia enterocolitica serotype O:8 / biotype 1B (strain NCTC 13174 / 8081).